Here is a 247-residue protein sequence, read N- to C-terminus: Fibroblast growth factor 14 (247 aa).

2 disordered regions span residues 1–37 (MAAAIASGLIRQKRQAREQHWDRPSASRRRSSPSKNR) and 216–247 (ETVPKAGVTPSKSTSASAIMNGGKPVNKCKTT). The span at 15–25 (QAREQHWDRPS) shows a compositional bias: basic and acidic residues.

The protein belongs to the heparin-binding growth factors family. As to quaternary structure, interacts with SCN8A. As to expression, brain and testis; widely distributed in the developing nervous system. In adult, high levels in the granular layer of the cerebellum, less in hippocampus and olfactory bulb.

It is found in the nucleus. Probably involved in nervous system development and function. This Mus musculus (Mouse) protein is Fibroblast growth factor 14 (Fgf14).